The chain runs to 423 residues: MVSIVLGSQWGDEGKGKITDMLSQDATLCCRAAGGHNAGHTIVHEDVTYDFHILPSGLVSPKCINLIGAGTVFHVPSFFKELAAIEAKGLKGAAQRIFVSDRAHVCFDLHSVVDGLEEKGLGGRKVGTTGKGIGPCYSDKAARRGVRVGEILDEETFERKLRTLDTSYRTRFGDLAYDVEEEIARFKEYRNLLKPHIVDQLEFLQEHKNSPNTLVEGANALMLDLDHGTYPFVTSSSTGLGGAVQALALNPASIKSVIGVVKAYTTRVGSGPFPSEQLNGDGEKLQQVGREFGVTTGRRRRCGWLDLVLCRYSHAINHYTALNLTKLDILDDFDEIKVGVAYILPDGKRTTGTFPADPNVVDKIQVEYVTLPGWKSNTMGVKRYEDLPPNARAYIEFIEREIGGVPVKWIGTGPARDHMIARD.

GTP is bound by residues 11–17 (GDEGKGK) and 39–41 (GHT). Residue Asp-12 is the Proton acceptor of the active site. Positions 12 and 39 each coordinate Mg(2+). IMP contacts are provided by residues 12-15 (DEGK), 37-40 (NAGH), Thr-129, Arg-143, Asn-219, Thr-234, and Arg-298. Catalysis depends on His-40, which acts as the Proton donor. Position 294-300 (294-300 (VTTGRRR)) interacts with substrate. GTP contacts are provided by residues Arg-300, 326-328 (KLD), and 411-413 (GTG).

Belongs to the adenylosuccinate synthetase family. In terms of assembly, homodimer. Mg(2+) is required as a cofactor.

It localises to the cytoplasm. It catalyses the reaction IMP + L-aspartate + GTP = N(6)-(1,2-dicarboxyethyl)-AMP + GDP + phosphate + 2 H(+). Its pathway is purine metabolism; AMP biosynthesis via de novo pathway; AMP from IMP: step 1/2. Plays an important role in the de novo pathway and in the salvage pathway of purine nucleotide biosynthesis. Catalyzes the first committed step in the biosynthesis of AMP from IMP. This chain is Adenylosuccinate synthetase, found in Penicillium rubens (strain ATCC 28089 / DSM 1075 / NRRL 1951 / Wisconsin 54-1255) (Penicillium chrysogenum).